Consider the following 436-residue polypeptide: Na(+)/H(+) antiporter NhaA 2 (436 aa).

The next 11 membrane-spanning stretches (helical) occupy residues 35–55 (FGGGLLLLGAVLALLWANSPW), 80–100 (LATWAADGLLAIFFFVVGLEL), 116–136 (ALPVVAAIGGMIVPALIYVGI), 147–167 (GWAIPTATDIAFALAVLAVIG), 176–196 (AFLLTLAVVDDLLAITVIAIF), 201–221 (FKLTPLLVALLPIALFGLLVQ), 226–246 (WWWALIPLAVVAWTLVHESGV), 283–303 (VSAGFAVPVFAFFAAGVSLRG), 313–333 (PIVVGIVAGLVLGKVLGIFGS), 354–374 (LLGVSLLAGIGFTVSLLIGEL), and 385–405 (VKAAVLTGSVIAALLASAVLS).

This sequence belongs to the NhaA Na(+)/H(+) (TC 2.A.33) antiporter family.

The protein resides in the cell membrane. It carries out the reaction Na(+)(in) + 2 H(+)(out) = Na(+)(out) + 2 H(+)(in). Its function is as follows. Na(+)/H(+) antiporter that extrudes sodium in exchange for external protons. The chain is Na(+)/H(+) antiporter NhaA 2 from Salinispora arenicola (strain CNS-205).